A 34-amino-acid chain; its full sequence is Chlorotoxin-like peptide AaCtx (34 aa).

4 disulfide bridges follow: Cys2-Cys19, Cys5-Cys27, Cys16-Cys32, and Cys20-Cys34.

The protein belongs to the short scorpion toxin superfamily. Chloride channel inhibitor family. In terms of tissue distribution, expressed by the venom gland.

Its subcellular location is the secreted. In terms of biological role, toxin with unknown function in healthy organisms. On glioma cells, interacts with chloride channels (probably ClC-3/CLCN3) and MMP2 at the surface of glioma cells. This complex is then internalized via caveolae, thus inhibiting the chloride channels necessary for cell shrinkage and tumor propagation. Inhibits migration and invasion of U87 glioma cells expressing CLCN3/ClC-3 voltage-gated chloride channels. The protein is Chlorotoxin-like peptide AaCtx of Androctonus australis (Sahara scorpion).